Here is a 225-residue protein sequence, read N- to C-terminus: PKHD-type hydroxylase YbiX (225 aa).

The Fe2OG dioxygenase domain occupies 78-177; the sequence is TLSTPLFNRY…RVASFMWIQS (100 aa). Positions 96, 98, and 158 each coordinate Fe cation. Position 168 (Arg168) interacts with 2-oxoglutarate.

The cofactor is Fe(2+). It depends on L-ascorbate as a cofactor.

The protein is PKHD-type hydroxylase YbiX of Shigella flexneri serotype 5b (strain 8401).